The following is a 167-amino-acid chain: Crossover junction endodeoxyribonuclease RuvC (167 aa).

Catalysis depends on residues Asp-7, Glu-67, and Asp-140. The Mg(2+) site is built by Asp-7, Glu-67, and Asp-140.

The protein belongs to the RuvC family. Homodimer which binds Holliday junction (HJ) DNA. The HJ becomes 2-fold symmetrical on binding to RuvC with unstacked arms; it has a different conformation from HJ DNA in complex with RuvA. In the full resolvosome a probable DNA-RuvA(4)-RuvB(12)-RuvC(2) complex forms which resolves the HJ. Mg(2+) serves as cofactor.

It is found in the cytoplasm. The catalysed reaction is Endonucleolytic cleavage at a junction such as a reciprocal single-stranded crossover between two homologous DNA duplexes (Holliday junction).. Its function is as follows. The RuvA-RuvB-RuvC complex processes Holliday junction (HJ) DNA during genetic recombination and DNA repair. Endonuclease that resolves HJ intermediates. Cleaves cruciform DNA by making single-stranded nicks across the HJ at symmetrical positions within the homologous arms, yielding a 5'-phosphate and a 3'-hydroxyl group; requires a central core of homology in the junction. The consensus cleavage sequence is 5'-(A/T)TT(C/G)-3'. Cleavage occurs on the 3'-side of the TT dinucleotide at the point of strand exchange. HJ branch migration catalyzed by RuvA-RuvB allows RuvC to scan DNA until it finds its consensus sequence, where it cleaves and resolves the cruciform DNA. This Dehalococcoides mccartyi (strain ATCC BAA-2100 / JCM 16839 / KCTC 5957 / BAV1) protein is Crossover junction endodeoxyribonuclease RuvC.